The chain runs to 155 residues: cAMP-dependent protein kinase type II-alpha regulatory subunit (155 aa).

The tract at residues 1–34 (SGSQDLEPSSGLVTDAIADSESEDDEDLDVPIPS) is disordered. The interval 1 to 81 (SGSQDLEPSS…LQEACKDILL (81 aa)) is dimerization and phosphorylation. Acidic residues predominate over residues 18–29 (ADSESEDDEDLD). Residues Ser-20 and Ser-22 each carry the phosphoserine modification. Position 41 is a phosphoserine; by PKA (Ser-41). 3',5'-cyclic AMP is bound by residues 82–155 (FKNL…ALMY) and Glu-150.

It belongs to the cAMP-dependent kinase regulatory chain family. In terms of assembly, the inactive form of the enzyme is composed of two regulatory chains and two catalytic chains. Activation by cAMP produces two active catalytic monomers and a regulatory dimer that binds four cAMP molecules. Interacts with AKAP4 and CBFA2T3. Interacts with the phosphorylated form of PJA2. Interacts with MYRIP; this interaction may link PKA to components of the exocytosis machinery, thus facilitating exocytosis, including insulin release. Forms a complex composed of PRKAR2A, GSK3B and GSKIP through GSKIP interaction; facilitates PKA-induced phosphorylation and regulates GSK3B activity. Interacts with ADCY8; inhibits adenylate cyclase activity through PKA phosphorylation. In terms of processing, phosphorylated by the activated catalytic chain. In terms of tissue distribution, four types of regulatory chains are found: I-alpha, I-beta, II-alpha, and II-beta. Their expression varies among tissues and is in some cases constitutive and in others inducible.

It localises to the cytoplasm. Its subcellular location is the cell membrane. Regulatory subunit of the cAMP-dependent protein kinases involved in cAMP signaling in cells. Type II regulatory chains mediate membrane association by binding to anchoring proteins, including the MAP2 kinase. The polypeptide is cAMP-dependent protein kinase type II-alpha regulatory subunit (PRKAR2A) (Sus scrofa (Pig)).